The chain runs to 882 residues: Putative HTH-type transcriptional regulator Mb0914c (882 aa).

The HTH luxR-type domain maps to proline 814–glycine 879. The H-T-H motif DNA-binding region spans asparagine 838–threonine 857.

In Mycobacterium bovis (strain ATCC BAA-935 / AF2122/97), this protein is Putative HTH-type transcriptional regulator Mb0914c.